The sequence spans 193 residues: Zinc finger CCHC domain-containing protein 17 (193 aa).

An S1 motif; truncated domain is found at 1–40 (MSSCRVDKPSEIVDVGDKVWVKLIGREMKNDRIKVSLSMK). S66 bears the Phosphoserine mark. The segment at 83–100 (TTCKKCGCKGHFAKDCFM) adopts a CCHC-type zinc-finger fold. Residue K96 is modified to N6-acetyllysine. Residues 113–193 (EEEEKEEAKS…KKKHKKKHKE (81 aa)) are disordered. The span at 118 to 129 (EEAKSAEFEKPV) shows a compositional bias: basic and acidic residues. A compositionally biased stretch (basic residues) spans 134 to 150 (PSRKRKKEKKKKKHRDR). Phosphoserine is present on S135. Residues 163-177 (DTGKRARHTSKDSKA) show a composition bias toward basic and acidic residues. Residues 178 to 193 (AKKKKKKKKHKKKHKE) show a composition bias toward basic residues.

In terms of assembly, may interact with PNN. May associate with the 60 S ribosomal subunit.

The protein resides in the nucleus. The protein localises to the nucleolus. In Macaca fascicularis (Crab-eating macaque), this protein is Zinc finger CCHC domain-containing protein 17 (ZCCHC17).